We begin with the raw amino-acid sequence, 153 residues long: Large-conductance mechanosensitive channel (153 aa).

Helical transmembrane passes span 16 to 36 and 88 to 108; these read VIDL…VKSL and GLFI…FMLV.

Belongs to the MscL family. Homopentamer.

It localises to the cell inner membrane. Its function is as follows. Channel that opens in response to stretch forces in the membrane lipid bilayer. May participate in the regulation of osmotic pressure changes within the cell. This Chromobacterium violaceum (strain ATCC 12472 / DSM 30191 / JCM 1249 / CCUG 213 / NBRC 12614 / NCIMB 9131 / NCTC 9757 / MK) protein is Large-conductance mechanosensitive channel.